The primary structure comprises 857 residues: Catalase-peroxidase (857 aa).

Positions W207 to Y330 form a cross-link, tryptophyl-tyrosyl-methioninium (Trp-Tyr) (with M-356). Residue H208 is the Proton acceptor of the active site. The tryptophyl-tyrosyl-methioninium (Tyr-Met) (with W-207) cross-link spans Y330 to M356. Heme b is bound at residue H371.

It belongs to the peroxidase family. Peroxidase/catalase subfamily. Homodimer or homotetramer. Heme b serves as cofactor. Post-translationally, formation of the three residue Trp-Tyr-Met cross-link is important for the catalase, but not the peroxidase activity of the enzyme.

It catalyses the reaction H2O2 + AH2 = A + 2 H2O. The catalysed reaction is 2 H2O2 = O2 + 2 H2O. In terms of biological role, bifunctional enzyme with both catalase and broad-spectrum peroxidase activity. The chain is Catalase-peroxidase from Rhodopirellula baltica (strain DSM 10527 / NCIMB 13988 / SH1).